A 336-amino-acid polypeptide reads, in one-letter code: Protein phosphatase 1 regulatory subunit pprA (336 aa).

Positions Met1–Ser10 are enriched in low complexity. A disordered region spans residues Met1–Glu24. A compositionally biased stretch (basic and acidic residues) spans Glu11 to Ser21. 12 LRR repeats span residues Pro26–Pro47, Thr49–Lys70, Asn71–Lys92, Glu93–Gln114, Ser115–Asp136, Lys139–Val160, Pro161–Val182, Asn183–Ser204, His205–Val225, Cys229–Lys250, Gln251–Pro272, and Asp273–Val294. In terms of domain architecture, LRRCT spans Asn306–Asn336.

Belongs to the SDS22 family.

Its subcellular location is the nucleus. Its function is as follows. Regulatory subunit of protein phosphatase 1. The polypeptide is Protein phosphatase 1 regulatory subunit pprA (pprA) (Dictyostelium discoideum (Social amoeba)).